The following is a 245-amino-acid chain: Orotidine 5'-phosphate decarboxylase (245 aa).

Substrate-binding positions include Asp-22, Lys-44, 71–80, Thr-131, Arg-192, Gln-201, Gly-221, and Arg-222; that span reads DLKFHDIPNT. The Proton donor role is filled by Lys-73.

It belongs to the OMP decarboxylase family. Type 1 subfamily. In terms of assembly, homodimer.

It carries out the reaction orotidine 5'-phosphate + H(+) = UMP + CO2. It participates in pyrimidine metabolism; UMP biosynthesis via de novo pathway; UMP from orotate: step 2/2. Catalyzes the decarboxylation of orotidine 5'-monophosphate (OMP) to uridine 5'-monophosphate (UMP). This Salmonella choleraesuis (strain SC-B67) protein is Orotidine 5'-phosphate decarboxylase.